The sequence spans 506 residues: Maturase K (506 aa).

It belongs to the intron maturase 2 family. MatK subfamily.

Its subcellular location is the plastid. It is found in the chloroplast. Its function is as follows. Usually encoded in the trnK tRNA gene intron. Probably assists in splicing its own and other chloroplast group II introns. In Ocimum basilicum (Sweet basil), this protein is Maturase K.